Here is a 646-residue protein sequence, read N- to C-terminus: Beta-galactosidase-1-like protein (646 aa).

An N-terminal signal peptide occupies residues 1-23 (MPPDLPSLLLRLVVLLLLSQAEA). N-linked (GlcNAc...) asparagine glycosylation occurs at N93. The active-site Proton donor is the E182. N-linked (GlcNAc...) asparagine glycosylation is present at N239. E260 serves as the catalytic Nucleophile.

This sequence belongs to the glycosyl hydrolase 35 family.

It localises to the secreted. In terms of biological role, probable glycosyl hydrolase. The chain is Beta-galactosidase-1-like protein (Glb1l) from Mus musculus (Mouse).